Here is a 75-residue protein sequence, read N- to C-terminus: Large ribosomal subunit protein bL31 (75 aa).

The protein belongs to the bacterial ribosomal protein bL31 family. Type A subfamily. As to quaternary structure, part of the 50S ribosomal subunit.

Its function is as follows. Binds the 23S rRNA. This Pelodictyon phaeoclathratiforme (strain DSM 5477 / BU-1) protein is Large ribosomal subunit protein bL31.